A 515-amino-acid polypeptide reads, in one-letter code: Tetratricopeptide repeat protein 8 (515 aa).

The stretch at 4–37 (EMEPLLRAWSYFRRRKFQLCADLCTQMLEKSPYD) is one TPR 1 repeat. Disordered stretches follow at residues 89-109 (RPGT…TQAV) and 118-137 (PITG…TMEQ). TPR repeat units follow at residues 225-258 (WWWK…QEMV), 259-291 (DTFL…FPGE), 292-325 (VTLL…DNTH), 326-359 (VEAI…GVYN), 360-393 (CQLF…AENE), 397-430 (ADVW…NNHH), and 432-464 (EAYN…APHM).

Part of BBSome complex, that contains BBS1, BBS2, BBS4, BBS5, BBS7, BBS8/TTC8, BBS9 and BBIP10. Interacts with PCM1. Interacts with CCDC28B. Interacts with PKD1. In terms of tissue distribution, isoform 1 is retina-specific whereas isoform 2 is ubiquitously expressed.

The protein localises to the cytoplasm. Its subcellular location is the cytoskeleton. The protein resides in the microtubule organizing center. It is found in the centrosome. It localises to the centriole. The protein localises to the cell projection. Its subcellular location is the cilium membrane. The protein resides in the centriolar satellite. It is found in the cilium. In terms of biological role, the BBSome complex is thought to function as a coat complex required for sorting of specific membrane proteins to the primary cilia. The BBSome complex is required for ciliogenesis but is dispensable for centriolar satellite function. This ciliogenic function is mediated in part by the Rab8 GDP/GTP exchange factor, which localizes to the basal body and contacts the BBSome. Rab8(GTP) enters the primary cilium and promotes extension of the ciliary membrane. Firstly the BBSome associates with the ciliary membrane and binds to RAB3IP/Rabin8, the guanosyl exchange factor (GEF) for Rab8 and then the Rab8-GTP localizes to the cilium and promotes docking and fusion of carrier vesicles to the base of the ciliary membrane. The BBSome complex, together with the LTZL1, controls SMO ciliary trafficking and contributes to the sonic hedgehog (SHH) pathway regulation. Required for proper BBSome complex assembly and its ciliary localization. The chain is Tetratricopeptide repeat protein 8 (Ttc8) from Mus musculus (Mouse).